A 180-amino-acid polypeptide reads, in one-letter code: Crossover junction endodeoxyribonuclease RuvC (180 aa).

Active-site residues include D7, E66, and D138. 3 residues coordinate Mg(2+): D7, E66, and D138.

The protein belongs to the RuvC family. As to quaternary structure, homodimer which binds Holliday junction (HJ) DNA. The HJ becomes 2-fold symmetrical on binding to RuvC with unstacked arms; it has a different conformation from HJ DNA in complex with RuvA. In the full resolvosome a probable DNA-RuvA(4)-RuvB(12)-RuvC(2) complex forms which resolves the HJ. It depends on Mg(2+) as a cofactor.

It is found in the cytoplasm. It carries out the reaction Endonucleolytic cleavage at a junction such as a reciprocal single-stranded crossover between two homologous DNA duplexes (Holliday junction).. Functionally, the RuvA-RuvB-RuvC complex processes Holliday junction (HJ) DNA during genetic recombination and DNA repair. Endonuclease that resolves HJ intermediates. Cleaves cruciform DNA by making single-stranded nicks across the HJ at symmetrical positions within the homologous arms, yielding a 5'-phosphate and a 3'-hydroxyl group; requires a central core of homology in the junction. The consensus cleavage sequence is 5'-(A/T)TT(C/G)-3'. Cleavage occurs on the 3'-side of the TT dinucleotide at the point of strand exchange. HJ branch migration catalyzed by RuvA-RuvB allows RuvC to scan DNA until it finds its consensus sequence, where it cleaves and resolves the cruciform DNA. The sequence is that of Crossover junction endodeoxyribonuclease RuvC from Paraburkholderia xenovorans (strain LB400).